The primary structure comprises 85 residues: CRISPR-associated endoribonuclease Cas2 2 (85 aa).

Asp8 serves as a coordination point for Mg(2+).

Belongs to the CRISPR-associated endoribonuclease Cas2 protein family. In terms of assembly, homodimer, forms a heterotetramer with a Cas1 homodimer. It depends on Mg(2+) as a cofactor.

Its function is as follows. CRISPR (clustered regularly interspaced short palindromic repeat), is an adaptive immune system that provides protection against mobile genetic elements (viruses, transposable elements and conjugative plasmids). CRISPR clusters contain sequences complementary to antecedent mobile elements and target invading nucleic acids. CRISPR clusters are transcribed and processed into CRISPR RNA (crRNA). Functions as a ssRNA-specific endoribonuclease. Involved in the integration of spacer DNA into the CRISPR cassette. The protein is CRISPR-associated endoribonuclease Cas2 2 of Chloroflexus aurantiacus (strain ATCC 29366 / DSM 635 / J-10-fl).